Reading from the N-terminus, the 511-residue chain is Maturase K (511 aa).

This sequence belongs to the intron maturase 2 family. MatK subfamily.

It localises to the plastid. It is found in the chloroplast. In terms of biological role, usually encoded in the trnK tRNA gene intron. Probably assists in splicing its own and other chloroplast group II introns. This Anchomanes difformis (Amorphophallus difformis) protein is Maturase K.